The following is a 391-amino-acid chain: Lipoyl synthase, mitochondrial (391 aa).

Residues methionine 1–valine 44 constitute a mitochondrion transit peptide. [4Fe-4S] cluster contacts are provided by cysteine 120, cysteine 125, cysteine 131, cysteine 150, cysteine 154, cysteine 157, and serine 365. The 220-residue stretch at lysine 135–leucine 354 folds into the Radical SAM core domain.

This sequence belongs to the radical SAM superfamily. Lipoyl synthase family. It depends on [4Fe-4S] cluster as a cofactor.

It is found in the mitochondrion. The enzyme catalyses [[Fe-S] cluster scaffold protein carrying a second [4Fe-4S](2+) cluster] + N(6)-octanoyl-L-lysyl-[protein] + 2 oxidized [2Fe-2S]-[ferredoxin] + 2 S-adenosyl-L-methionine + 4 H(+) = [[Fe-S] cluster scaffold protein] + N(6)-[(R)-dihydrolipoyl]-L-lysyl-[protein] + 4 Fe(3+) + 2 hydrogen sulfide + 2 5'-deoxyadenosine + 2 L-methionine + 2 reduced [2Fe-2S]-[ferredoxin]. The protein operates within protein modification; protein lipoylation via endogenous pathway; protein N(6)-(lipoyl)lysine from octanoyl-[acyl-carrier-protein]: step 2/2. Its function is as follows. Catalyzes the radical-mediated insertion of two sulfur atoms into the C-6 and C-8 positions of the octanoyl moiety bound to the lipoyl domains of lipoate-dependent enzymes, thereby converting the octanoylated domains into lipoylated derivatives. This is Lipoyl synthase, mitochondrial from Clavispora lusitaniae (strain ATCC 42720) (Yeast).